The following is a 300-amino-acid chain: Putative lysophosphatidic acid:oleoyl-CoA acyltransferase (300 aa).

The chain crosses the membrane as a helical span at residues Trp-32 to Leu-52. Positions His-115 to Asp-120 match the HXXXXD motif motif.

The protein belongs to the 1-acyl-sn-glycerol-3-phosphate acyltransferase family.

It localises to the lipid droplet. It is found in the endoplasmic reticulum membrane. The protein resides in the golgi apparatus membrane. It carries out the reaction a 1-acyl-sn-glycero-3-phosphate + an acyl-CoA = a 1,2-diacyl-sn-glycero-3-phosphate + CoA. Its function is as follows. Acyl-CoA-dependent lysophosphatidic acid acyltransferase with preference for oleoyl-CoA. Involved in triacylglyceride homeostasis and lipid droplet formation. Involved in vacuolar protein sorting. The chain is Putative lysophosphatidic acid:oleoyl-CoA acyltransferase (vps66) from Schizosaccharomyces pombe (strain 972 / ATCC 24843) (Fission yeast).